Here is a 197-residue protein sequence, read N- to C-terminus: MSELLNYVASCRLPTEWGVFTMHGFEEAGGQEHVALTVGDCSDGNPVLTRIHSECLTGDALFSKKCDCGPQLEAAMKAVQAEGRGIIVYLRQEGRGIGLINKIRAYHLQDQGMDTVEANVALGLPVDARDFRLAQSIYEYLGIRSVKLLTNNPEKIQTLKDAGINVVERIPLHVGENLENKRYLQTKADKLGHLMSE.

50 to 54 (RIHSE) contributes to the GTP binding site. Zn(2+)-binding residues include Cys-55, Cys-66, and Cys-68. GTP-binding positions include Gln-71, 93–95 (EGR), and Thr-115. Asp-127 serves as the catalytic Proton acceptor. Residue Arg-129 is the Nucleophile of the active site. GTP-binding residues include Thr-150 and Lys-155.

The protein belongs to the GTP cyclohydrolase II family. Zn(2+) serves as cofactor.

It catalyses the reaction GTP + 4 H2O = 2,5-diamino-6-hydroxy-4-(5-phosphoribosylamino)-pyrimidine + formate + 2 phosphate + 3 H(+). The protein operates within cofactor biosynthesis; riboflavin biosynthesis; 5-amino-6-(D-ribitylamino)uracil from GTP: step 1/4. Its function is as follows. Catalyzes the conversion of GTP to 2,5-diamino-6-ribosylamino-4(3H)-pyrimidinone 5'-phosphate (DARP), formate and pyrophosphate. This Neisseria meningitidis serogroup A / serotype 4A (strain DSM 15465 / Z2491) protein is GTP cyclohydrolase-2.